The primary structure comprises 495 residues: Histidine--tRNA ligase (495 aa).

The protein belongs to the class-II aminoacyl-tRNA synthetase family. In terms of assembly, homodimer.

The protein localises to the cytoplasm. It catalyses the reaction tRNA(His) + L-histidine + ATP = L-histidyl-tRNA(His) + AMP + diphosphate + H(+). The polypeptide is Histidine--tRNA ligase (Bartonella henselae (strain ATCC 49882 / DSM 28221 / CCUG 30454 / Houston 1) (Rochalimaea henselae)).